A 253-amino-acid chain; its full sequence is Probable transcriptional regulatory protein RPR_05505 (253 aa).

The protein belongs to the TACO1 family.

It localises to the cytoplasm. The polypeptide is Probable transcriptional regulatory protein RPR_05505 (Rickettsia peacockii (strain Rustic)).